The sequence spans 510 residues: Mitochondrial metal transporter 1 (510 aa).

A disordered region spans residues 120–141 (ADKPSSLNLHSHTHSHGHTHSH). Residues 130-141 (SHTHSHGHTHSH) show a composition bias toward basic residues. A run of 6 helical transmembrane segments spans residues 165 to 185 (WVGL…GIVF), 194 to 214 (AIHA…VGLA), 241 to 261 (LAMA…GPVI), 286 to 306 (VTDI…EWIF), 333 to 353 (LTSL…IQSL), and 356 to 376 (IGGL…MCIA).

Belongs to the cation diffusion facilitator (CDF) transporter (TC 2.A.4) family. SLC30A subfamily.

Its subcellular location is the mitochondrion membrane. Mitochondrial metal transporter involved in mitochondrial iron accumulation. In Saccharomyces cerevisiae (strain ATCC 204508 / S288c) (Baker's yeast), this protein is Mitochondrial metal transporter 1 (MMT1).